The following is a 584-amino-acid chain: Protein FAM117B (584 aa).

A disordered region spans residues 1 to 214 (MSQRVRRNGS…SSSSSIIRRT (214 aa)). Serine 10 bears the Phosphoserine mark. Positions 53-79 (TRGGGGGGNNGGNGGASGPSGGGGSGG) are enriched in gly residues. Over residues 80-90 (PRTASRSTSPT) the composition is skewed to low complexity. Phosphoserine is present on serine 102. Over residues 114 to 132 (TSTRGTSPTRGTAPGARSS) the composition is skewed to low complexity. The span at 133-142 (PPRPQPPPPL) shows a compositional bias: pro residues. The span at 145-154 (TVSSPSSSPT) shows a compositional bias: polar residues. Positions 204 to 214 (SSSSSSIIRRT) are enriched in low complexity. 4 positions are modified to phosphoserine: serine 206, serine 215, serine 216, and serine 268. 2 disordered regions span residues 227 to 461 (GHWP…SYMF) and 551 to 584 (STNTEQERVSRGTSTVLPSASLHAPPEPIEEAEG). The span at 287–297 (RSKHSSRHHRD) shows a compositional bias: basic residues. At serine 340 the chain carries Phosphoserine. A compositionally biased stretch (basic and acidic residues) spans 350 to 361 (IIIKETGEKEEQ). The span at 379-392 (QRSSSTRSIDTQTP) shows a compositional bias: polar residues. The residue at position 386 (serine 386) is a Phosphoserine. Positions 399-412 (SNNSSRSQSVSPTS) are enriched in low complexity. Residues serine 444 and serine 452 each carry the phosphoserine modification.

This is Protein FAM117B (Fam117b) from Mus musculus (Mouse).